A 454-amino-acid chain; its full sequence is tRNA-2-methylthio-N(6)-dimethylallyladenosine synthase (454 aa).

An MTTase N-terminal domain is found at 11-128 (KKLYIQTHGC…LPEMIETPRE (118 aa)). The [4Fe-4S] cluster site is built by Cys20, Cys57, Cys91, Cys165, Cys169, and Cys172. The Radical SAM core domain maps to 151-382 (EADGATAFVS…QTRIIQQAQE (232 aa)). A TRAM domain is found at 385 to 449 (RRMVGNTERV…PNSLRGVLLG (65 aa)).

The protein belongs to the methylthiotransferase family. MiaB subfamily. Monomer. Requires [4Fe-4S] cluster as cofactor.

It localises to the cytoplasm. It carries out the reaction N(6)-dimethylallyladenosine(37) in tRNA + (sulfur carrier)-SH + AH2 + 2 S-adenosyl-L-methionine = 2-methylsulfanyl-N(6)-dimethylallyladenosine(37) in tRNA + (sulfur carrier)-H + 5'-deoxyadenosine + L-methionine + A + S-adenosyl-L-homocysteine + 2 H(+). In terms of biological role, catalyzes the methylthiolation of N6-(dimethylallyl)adenosine (i(6)A), leading to the formation of 2-methylthio-N6-(dimethylallyl)adenosine (ms(2)i(6)A) at position 37 in tRNAs that read codons beginning with uridine. This is tRNA-2-methylthio-N(6)-dimethylallyladenosine synthase from Saccharophagus degradans (strain 2-40 / ATCC 43961 / DSM 17024).